Consider the following 371-residue polypeptide: Macronuclear solute carrier homolog CR-MSC (371 aa).

Solcar repeat units follow at residues 16–111 (RMNY…FYDK), 120–208 (ARPD…CKEN), and 215–304 (PHWI…LSQF). The next 6 helical transmembrane spans lie at 22-42 (FAAANVIALITHAATQPLDMV), 89-109 (TFFFRTVCYTTARVTAFGYFY), 126-146 (VAAGVLGGFIAGVVTNPIDIV), 184-204 (AGANGFKLAAICSSMTNIYDW), 221-241 (LWGTAVAVAIGTVVSMPFDMI), and 281-301 (FGSFYAGGEAYFLRLFLICYL).

The protein belongs to the mitochondrial carrier (TC 2.A.29) family.

It is found in the membrane. The protein is Macronuclear solute carrier homolog CR-MSC of Oxytricha fallax.